We begin with the raw amino-acid sequence, 252 residues long: Major prion protein (252 aa).

A signal peptide spans 1–22 (MANLGCWMLVLFVATWSDLGLC). The tract at residues 23–38 (KKRPKPGGWNTGGSRY) is interaction with ADGRG6. Residues 23-229 (KKRPKPGGWN…ESQAYYQRGS (207 aa)) are interaction with GRB2, ERI3 and SYN1. A disordered region spans residues 26 to 106 (PKPGGWNTGG…QWNKPSKPKT (81 aa)). Repeat copies occupy residues 51–58 (PQGGGWGQ), 59–66 (PHGGGWGQ), 67–74 (PHGGGWGQ), 75–82 (PHGGSWGQ), and 83–90 (PHGGGWGQ). The tract at residues 51-90 (PQGGGWGQPHGGGWGQPHGGGWGQPHGGSWGQPHGGGWGQ) is 5 X 8 AA tandem repeats of P-H-G-G-G-W-G-Q. Residues 52–94 (QGGGWGQPHGGGWGQPHGGGWGQPHGGSWGQPHGGGWGQGGGT) are compositionally biased toward gly residues. The Cu(2+) site is built by histidine 60, glycine 61, glycine 62, histidine 68, glycine 69, glycine 70, histidine 76, glycine 77, glycine 78, histidine 84, glycine 85, and glycine 86. A disulfide bridge connects residues cysteine 178 and cysteine 213. Asparagine 180 and asparagine 196 each carry an N-linked (GlcNAc...) asparagine glycan. Serine 229 carries GPI-anchor amidated serine lipidation. The propeptide at 230–252 (SMVLFSSPPVILLISFLIFLIVG) is removed in mature form.

Belongs to the prion family. Monomer and homodimer. Has a tendency to aggregate into amyloid fibrils containing a cross-beta spine, formed by a steric zipper of superposed beta-strands. Soluble oligomers may represent an intermediate stage on the path to fibril formation. Copper binding may promote oligomerization. Interacts with GRB2, APP, ERI3/PRNPIP and SYN1. Mislocalized cytosolically exposed PrP interacts with MGRN1; this interaction alters MGRN1 subcellular location and causes lysosomal enlargement. Interacts with APP. Interacts with KIAA1191. Interacts with ADGRG6.

The protein resides in the cell membrane. It localises to the golgi apparatus. Functionally, its primary physiological function is unclear. May play a role in neuronal development and synaptic plasticity. May be required for neuronal myelin sheath maintenance. May promote myelin homeostasis through acting as an agonist for ADGRG6 receptor. May play a role in iron uptake and iron homeostasis. Soluble oligomers are toxic to cultured neuroblastoma cells and induce apoptosis (in vitro). Association with GPC1 (via its heparan sulfate chains) targets PRNP to lipid rafts. Also provides Cu(2+) or Zn(2+) for the ascorbate-mediated GPC1 deaminase degradation of its heparan sulfate side chains. The chain is Major prion protein (PRNP) from Sapajus apella (Brown-capped capuchin).